The sequence spans 500 residues: LEM protein 2 (500 aa).

One can recognise an LEM domain in the interval 1–45 (MVDVEKMSDAELRAELNVRGANVGPVTGTTRSLYEKKLKKLLSGG). Topologically, residues 1–325 (MVDVEKMSDA…VKQTNIFNEA (325 aa)) are nuclear. A disordered region spans residues 39-202 (KKLLSGGAKT…RRITSVPGLI (164 aa)). Positions 46 to 57 (AKTPARPTVAKP) are enriched in low complexity. Positions 58–75 (APKPTPKSAPAPKSPKSP) are enriched in pro residues. Positions 77 to 89 (ARRSIPRAAATAA) are enriched in low complexity. Residues 103 to 122 (EEMSDSDDDMRDDDDDDEEI) are compositionally biased toward acidic residues. Composition is skewed to low complexity over residues 130 to 141 (SSFRSANSTASS) and 168 to 197 (NTPRTTSSSSKTTINTTTTRIPSTPRRITS). The chain crosses the membrane as a helical span at residues 326–346 (IYFALYVILILFVVLGIAYAL). The Perinuclear space portion of the chain corresponds to 347–378 (TTTHRPKTADFSGYWGVLKAAGRDSLNFFYNY). Residues 379 to 399 (AILPVVSLGIFVVLGAGIYFG) form a helical membrane-spanning segment. At 400 to 500 (HRKYKEAKEQ…WIGNQSQKRW (101 aa)) the chain is on the nuclear side.

Interacts with lmn-1. Interacts (via LEM domain and the C-terminal nuclear domain) with baf-1. As to expression, ubiquitous. High expression in germline and intestine.

It is found in the nucleus inner membrane. It localises to the nucleus envelope. The protein resides in the chromosome. Nuclear lamina-associated inner nuclear membrane protein that is involved in cell division, nuclear structure organization, maintenance of nuclear envelope integrity and nuclear envelope reformation after mitosis. In interphase cells, plays a role in anchoring and spatial arrangement of chromosome arms at the nuclear periphery, forming so-called lem-2 subdomains. Both arms of autosomes but only the left arm of the X chromosome are anchored in lem-2 subdomains; sequences bound by lem-2 are mainly repetitive chromosome sequences and inactive genes. Involved in chromosome segregation and cell division, probably via its interaction with the nuclear intermediate filament protein lmn-1, the main component of nuclear lamina. Required to organize the distribution of lmn-1, nuclear pore complexes (NPCs) and chromatin in mitotically active cells. Involved in the nuclear positioning and efficient anchoring of microtubule-organizing centers (MTOCs) to the nuclear envelope during mitosis as well as on maintaining correct nuclear morphology. Contributes to closure of nuclear envelope (NE) holes and prevents excess nuclear membranes after meiosis and mitosis. Together with emr-1, plays a role in baf-1 enrichment at the nuclear envelope in anaphase. Together with emr-1, involved in muscle cell attachment to hypodermal cells, as well as muscle cell location and sarcomere organization. May play a role in radiation-induced DNA damage repair response. In Caenorhabditis elegans, this protein is LEM protein 2 (lem-2).